The following is a 367-amino-acid chain: Chorismate synthase (367 aa).

NADP(+) is bound at residue Arg-48. FMN-binding positions include 125–127 (RSS), 238–239 (NA), Gly-278, 293–297 (KPTSS), and Arg-319.

Belongs to the chorismate synthase family. In terms of assembly, homotetramer. It depends on FMNH2 as a cofactor.

The catalysed reaction is 5-O-(1-carboxyvinyl)-3-phosphoshikimate = chorismate + phosphate. Its pathway is metabolic intermediate biosynthesis; chorismate biosynthesis; chorismate from D-erythrose 4-phosphate and phosphoenolpyruvate: step 7/7. Its function is as follows. Catalyzes the anti-1,4-elimination of the C-3 phosphate and the C-6 proR hydrogen from 5-enolpyruvylshikimate-3-phosphate (EPSP) to yield chorismate, which is the branch point compound that serves as the starting substrate for the three terminal pathways of aromatic amino acid biosynthesis. This reaction introduces a second double bond into the aromatic ring system. The protein is Chorismate synthase of Halorhodospira halophila (strain DSM 244 / SL1) (Ectothiorhodospira halophila (strain DSM 244 / SL1)).